Consider the following 227-residue polypeptide: NADH-quinone oxidoreductase subunit C (227 aa).

This sequence belongs to the complex I 30 kDa subunit family. In terms of assembly, NDH-1 is composed of 14 different subunits. Subunits NuoB, C, D, E, F, and G constitute the peripheral sector of the complex.

The protein resides in the cell inner membrane. It catalyses the reaction a quinone + NADH + 5 H(+)(in) = a quinol + NAD(+) + 4 H(+)(out). NDH-1 shuttles electrons from NADH, via FMN and iron-sulfur (Fe-S) centers, to quinones in the respiratory chain. The immediate electron acceptor for the enzyme in this species is believed to be ubiquinone. Couples the redox reaction to proton translocation (for every two electrons transferred, four hydrogen ions are translocated across the cytoplasmic membrane), and thus conserves the redox energy in a proton gradient. The polypeptide is NADH-quinone oxidoreductase subunit C (Coxiella burnetii (strain RSA 331 / Henzerling II)).